The sequence spans 179 residues: Large ribosomal subunit protein uL5 (179 aa).

The protein belongs to the universal ribosomal protein uL5 family. As to quaternary structure, part of the 50S ribosomal subunit; part of the 5S rRNA/L5/L18/L25 subcomplex. Contacts the 5S rRNA and the P site tRNA. Forms a bridge to the 30S subunit in the 70S ribosome.

Functionally, this is one of the proteins that bind and probably mediate the attachment of the 5S RNA into the large ribosomal subunit, where it forms part of the central protuberance. In the 70S ribosome it contacts protein S13 of the 30S subunit (bridge B1b), connecting the 2 subunits; this bridge is implicated in subunit movement. Contacts the P site tRNA; the 5S rRNA and some of its associated proteins might help stabilize positioning of ribosome-bound tRNAs. This Buchnera aphidicola subsp. Acyrthosiphon kondoi (Acyrthosiphon kondoi symbiotic bacterium) protein is Large ribosomal subunit protein uL5.